A 455-amino-acid chain; its full sequence is Immunoglobulin alpha-2 heavy chain (455 aa).

Ig-like domains follow at residues E1–C95, P121–T213, P227–T322, and P330–D432. Residues E1–S115 form a variable (V) domain, involved in antigen recognition region. 2 cysteine pairs are disulfide-bonded: C22-C95 and C141-C200. The segment at A116 to Y455 is constant (C) domain. Residues N162, N207, and N246 are each glycosylated (N-linked (GlcNAc...) asparagine). Intrachain disulfides connect C225–C282 and C249–C306. N-linked (GlcNAc...) asparagine glycosylation is present at N320. A disulfide bond links C352 and C415. The N-linked (GlcNAc...) asparagine glycan is linked to N442.

As to quaternary structure, immunoglobulins are composed of two identical heavy chains and two identical light chains; disulfide-linked. Monomeric or polymeric.

Its subcellular location is the secreted. The protein localises to the cell membrane. In terms of biological role, immunoglobulins, also known as antibodies, are membrane-bound or secreted glycoproteins produced by B lymphocytes. In the recognition phase of humoral immunity, the membrane-bound immunoglobulins serve as receptors which, upon binding of a specific antigen, trigger the clonal expansion and differentiation of B lymphocytes into immunoglobulins-secreting plasma cells. Secreted immunoglobulins mediate the effector phase of humoral immunity, which results in the elimination of bound antigens. The antigen binding site is formed by the variable domain of one heavy chain, together with that of its associated light chain. Thus, each immunoglobulin has two antigen binding sites with remarkable affinity for a particular antigen. The variable domains are assembled by a process called V-(D)-J rearrangement and can then be subjected to somatic hypermutations which, after exposure to antigen and selection, allow affinity maturation for a particular antigen. Ig alpha is the major immunoglobulin class in body secretions. This Homo sapiens (Human) protein is Immunoglobulin alpha-2 heavy chain.